Reading from the N-terminus, the 145-residue chain is 3-dehydroquinate dehydratase (145 aa).

Y22 functions as the Proton acceptor in the catalytic mechanism. Substrate contacts are provided by N71, H77, and D84. Catalysis depends on H97, which acts as the Proton donor. Substrate is bound by residues 98 to 99 (LS) and R108.

Belongs to the type-II 3-dehydroquinase family. Homododecamer.

The enzyme catalyses 3-dehydroquinate = 3-dehydroshikimate + H2O. It functions in the pathway metabolic intermediate biosynthesis; chorismate biosynthesis; chorismate from D-erythrose 4-phosphate and phosphoenolpyruvate: step 3/7. Catalyzes a trans-dehydration via an enolate intermediate. The polypeptide is 3-dehydroquinate dehydratase (Francisella philomiragia subsp. philomiragia (strain ATCC 25017 / CCUG 19701 / FSC 153 / O#319-036)).